A 389-amino-acid polypeptide reads, in one-letter code: UDP-D-apiose/UDP-D-xylose synthase 2 (389 aa).

Residues Phe28, Ile29, Asp49, Asn76, Ile77, and Leu96 each coordinate NAD(+). 5 residues coordinate UDP-alpha-D-glucuronate: Tyr105, Thr139, Glu141, Arg182, and Tyr185. 2 residues coordinate NAD(+): Tyr185 and Lys189. Residue Tyr185 is the Proton acceptor of the active site. Asn214 serves as a coordination point for UDP-alpha-D-glucuronate. Positions 215 and 235 each coordinate NAD(+). The UDP-alpha-D-glucuronate site is built by Lys251, Val253, Arg260, Tyr331, Tyr335, Asp337, and Arg341.

Belongs to the NAD(P)-dependent epimerase/dehydratase family. Homodimer and heterodimer with AXS1. The cofactor is NAD(+). Widely expressed with stronger expression in dark-grown seedlings, leaves and stems, and lower levels in flowers, siliques, pistils, pollen and roots.

It is found in the cytoplasm. The catalysed reaction is UDP-alpha-D-glucuronate + H(+) = UDP-alpha-D-xylose + CO2. It catalyses the reaction UDP-alpha-D-glucuronate + H(+) = UDP-alpha-D-apiose + CO2. Functionally, together with AXS1, catalyzes the conversion of UDP-D-glucuronate into a mixture of UDP-D-apiose (UDP-Api) as the main product and UDP-D-xylose to a lesser extent, via a cycle of oxidation and reduction. D-Apiose (3-C-hydroxymethyl-d-erythrose) is the only plant cell wall monosaccharide with a branched carbon skeleton and is found in rhamnogalacturonan II (RG-II), apiogalacturonan, and several apioglycosides. In Arabidopsis thaliana (Mouse-ear cress), this protein is UDP-D-apiose/UDP-D-xylose synthase 2.